A 552-amino-acid polypeptide reads, in one-letter code: Probable protein kinase UbiB (552 aa).

In terms of domain architecture, Protein kinase spans 121–504 (HFDTVPLASA…QGLQRRVVNA (384 aa)). ATP contacts are provided by residues 127–135 (LASASISQV) and Lys149. The Proton acceptor role is filled by Asp284. The next 2 helical transmembrane spans lie at 501–521 (VVNA…YGLH) and 530–550 (IPVW…SAWW).

Belongs to the ABC1 family. UbiB subfamily.

It is found in the cell inner membrane. Its pathway is cofactor biosynthesis; ubiquinone biosynthesis [regulation]. Its function is as follows. Is probably a protein kinase regulator of UbiI activity which is involved in aerobic coenzyme Q (ubiquinone) biosynthesis. This Xylella fastidiosa (strain M12) protein is Probable protein kinase UbiB.